We begin with the raw amino-acid sequence, 149 residues long: Nucleoside diphosphate kinase (149 aa).

The ATP site is built by lysine 9, phenylalanine 57, arginine 85, threonine 91, arginine 102, and asparagine 112. Histidine 115 acts as the Pros-phosphohistidine intermediate in catalysis.

Belongs to the NDK family. As to quaternary structure, homotetramer. Mg(2+) serves as cofactor.

It is found in the cytoplasm. The enzyme catalyses dZDP + ATP = dZTP + ADP. The catalysed reaction is a 2'-deoxyribonucleoside 5'-diphosphate + ATP = a 2'-deoxyribonucleoside 5'-triphosphate + ADP. It catalyses the reaction a ribonucleoside 5'-diphosphate + ATP = a ribonucleoside 5'-triphosphate + ADP. It functions in the pathway purine metabolism. In terms of biological role, major role in the synthesis of nucleoside triphosphates other than ATP. The ATP gamma phosphate is transferred to the NDP beta phosphate via a ping-pong mechanism, using a phosphorylated active-site intermediate. Its function is as follows. (Microbial infection) Catalyzes the phosphorylation of dZDP to dZTP, when the bacterium is infected by a phage that produces the substrate for the synthesis of dZTP (2- amino-2'-deoxyadenosine 5'-triphosphate), which is then used by the phage as a DNA polymerase substrate. The polypeptide is Nucleoside diphosphate kinase (Picosynechococcus sp. (strain ATCC 27264 / PCC 7002 / PR-6) (Agmenellum quadruplicatum)).